The sequence spans 717 residues: Proline-rich receptor-like protein kinase PERK2 (717 aa).

Positions 1-197 (MSSAPPPGGT…GSLSPPPPAS (197 aa)) are enriched in pro residues. Residues 1–221 (MSSAPPPGGT…GSSPPAQSSK (221 aa)) are disordered. The Extracellular segment spans residues 1–228 (MSSAPPPGGT…SSKELSKGAM (228 aa)). Residues 198–220 (PSGGRSPSTPSTTPGSSPPAQSS) show a composition bias toward low complexity. Residues 229 to 249 (VGIAIGGGFVLLVALALIFFL) form a helical membrane-spanning segment. Residues 250 to 717 (CKKKRRRDNE…NIKRPGQGYG (468 aa)) are Cytoplasmic-facing. The segment at 258–323 (NEAPPAPIDG…YDSNYSDQSV (66 aa)) is disordered. The segment covering 289–303 (VPPPKSPSSAPPRPP) has biased composition (pro residues). Over residues 307 to 322 (SSGSSGDYDSNYSDQS) the composition is skewed to low complexity. The Protein kinase domain maps to 354–631 (FSEANLLGQG…QVARVLEGNI (278 aa)). ATP is bound by residues 360 to 368 (LGQGGFGYV) and lysine 382. Aspartate 478 acts as the Proton acceptor in catalysis. Polar residues-rich tracts occupy residues 632–644 (SPSD…TPGH) and 692–705 (SWSS…QGKA). 2 disordered regions span residues 632 to 665 (SPSD…DNEG) and 690 to 717 (YPSW…QGYG).

This sequence belongs to the protein kinase superfamily. Ser/Thr protein kinase family. In terms of tissue distribution, mostly expressed in inflorescence bolt, flower buds and siliques, and, to a lower extent, in roots, seedlings and leaves.

The protein localises to the cell membrane. The catalysed reaction is L-seryl-[protein] + ATP = O-phospho-L-seryl-[protein] + ADP + H(+). It carries out the reaction L-threonyl-[protein] + ATP = O-phospho-L-threonyl-[protein] + ADP + H(+). The polypeptide is Proline-rich receptor-like protein kinase PERK2 (PERK2) (Arabidopsis thaliana (Mouse-ear cress)).